Consider the following 190-residue polypeptide: CASP-like protein 1E1 (190 aa).

Residues M1–S23 are disordered. The Cytoplasmic portion of the chain corresponds to M1–E28. A helical membrane pass occupies residues L29–A49. Over K50–N83 the chain is Extracellular. The N-linked (GlcNAc...) asparagine glycan is linked to N67. A helical transmembrane segment spans residues I84 to S104. Residues K105 to S111 are Cytoplasmic-facing. Residues L112–G132 form a helical membrane-spanning segment. The Extracellular segment spans residues A133 to Q163. A helical membrane pass occupies residues A164–L184. Over D185 to P190 the chain is Cytoplasmic.

This sequence belongs to the Casparian strip membrane proteins (CASP) family. In terms of assembly, homodimer and heterodimers.

It is found in the cell membrane. In Arabidopsis thaliana (Mouse-ear cress), this protein is CASP-like protein 1E1.